Here is a 319-residue protein sequence, read N- to C-terminus: MNSLLQALHLLRCDLLSLPIGDAQTRSAELTALLRFGADLNIIKRRVVIEVKLCGSLLLNRVESVLRNIYGITPKLIRSTPRNDIGESCFLLRIDDPSLARKLGLIDTSLAPVRGLPNHLALASGSALKGLVRGAILASGVFTESTRKFAMEVYAPSNETALCLQGSINKLNVIAKIKEVRGSYKVVIRDIDNVAPLLRNVGARNSVEKIEQFIKLRHPENLGPRLPNFDDANLRRSAIAAASSVRRIERALQILKGDAPQHLLYAGQLRLNNTHASLEELGKLAEPAMTKDAIAGRIRRLLCLADKRAKTLGIPDTFS.

Residues 277–310 (SLEELGKLAEPAMTKDAIAGRIRRLLCLADKRAK) constitute a DNA-binding region (H-T-H motif).

It belongs to the WhiA family.

Involved in cell division and chromosome segregation. The sequence is that of Probable cell division protein WhiA from Tropheryma whipplei (strain Twist) (Whipple's bacillus).